The following is a 531-amino-acid chain: Acetate CoA-transferase YdiF (531 aa).

Catalysis depends on Glu-333, which acts as the 5-glutamyl coenzyme A thioester intermediate.

The protein belongs to the 3-oxoacid CoA-transferase family. Homotetramer; dimer of dimers.

It carries out the reaction an acyl-CoA + acetate = a carboxylate + acetyl-CoA. Functionally, coA transferase having broad substrate specificity for short-chain acyl-CoA thioesters with the activity decreasing when the length of the carboxylic acid chain exceeds four carbons. May play a role in short-chain fatty acid metabolism in E.coli. The sequence is that of Acetate CoA-transferase YdiF (ydiF) from Escherichia coli (strain K12).